Consider the following 500-residue polypeptide: Probable trehalose-phosphate phosphatase 8 (500 aa).

The protein belongs to the trehalose phosphatase family. A divalent metal cation is required as a cofactor.

The enzyme catalyses alpha,alpha-trehalose 6-phosphate + H2O = alpha,alpha-trehalose + phosphate. Its pathway is glycan biosynthesis; trehalose biosynthesis. Its function is as follows. Removes the phosphate from trehalose 6-phosphate to produce free trehalose. Trehalose accumulation in plant may improve abiotic stress tolerance. In Oryza sativa subsp. japonica (Rice), this protein is Probable trehalose-phosphate phosphatase 8 (TPP8).